A 271-amino-acid chain; its full sequence is DNA repair protein RecO (271 aa).

This sequence belongs to the RecO family.

In terms of biological role, involved in DNA repair and RecF pathway recombination. This Synechococcus sp. (strain CC9311) protein is DNA repair protein RecO.